Consider the following 263-residue polypeptide: Non-functional protein STAY-GREEN, chloroplastic (263 aa).

Residues 1–54 (MDTLTSAPLLTSKFKPSFSPQQKPCFPHRRRFENGKKKQSIVPVARLFGPAIFE) constitute a chloroplast transit peptide.

The protein belongs to the staygreen family.

The protein localises to the plastid. It localises to the chloroplast. Its function is as follows. Non-functional protein probably interfering with the disassembling mechanism of the intact light-harvesting complex of photosystem II (LHCII) in the thylakoid membranes. Responsible for a stay-green phenotype. The sequence is that of Non-functional protein STAY-GREEN, chloroplastic (SGR) from Pisum sativum (Garden pea).